We begin with the raw amino-acid sequence, 755 residues long: Probable ubiquitin carboxyl-terminal hydrolase creB (755 aa).

Positions 1–32 (MGSFLRSLRRDVGPPTPSVGATPAKKEPPVPP) are disordered. The USP domain maps to 55-468 (FGMENYGNTC…CAYVLFYQET (414 aa)). C64 (nucleophile) is an active-site residue. Disordered stretches follow at residues 119-146 (EKQK…DSPE) and 237-270 (EASK…TPNT). A compositionally biased stretch (basic and acidic residues) spans 237–246 (EASKQPEPER). Residues 254–270 (ADSTELSGSSGSKTPNT) are compositionally biased toward polar residues. H419 functions as the Proton acceptor in the catalytic mechanism. Positions 495-755 (TLKQNGYPLS…LKKKSFSILS (261 aa)) are disordered. A compositionally biased stretch (low complexity) spans 547–560 (ESSPADPSTTASAT). Residues 577–648 (KKSDSHFKKE…RRHSPDDTKK (72 aa)) show a composition bias toward basic and acidic residues. A coiled-coil region spans residues 581 to 630 (SHFKKERAKEEKERKANEKEKEKQRRRDQEARIREQRREDAEIRAALEAS). The segment covering 654-666 (SRLKRGSKSFSHR) has biased composition (basic residues). Positions 693-709 (NGASESQQQLPNGQSPG) are enriched in polar residues. Residues 718 to 733 (TGLDEERDTLKDPKHD) show a composition bias toward basic and acidic residues. The span at 734–755 (RSGHHGKWRSFSLKKKSFSILS) shows a compositional bias: basic residues.

This sequence belongs to the peptidase C19 family. In terms of assembly, interacts with creA, creC and qutD.

The enzyme catalyses Thiol-dependent hydrolysis of ester, thioester, amide, peptide and isopeptide bonds formed by the C-terminal Gly of ubiquitin (a 76-residue protein attached to proteins as an intracellular targeting signal).. Ubiquitin thioesterase component of the regulatory network controlling carbon source utilization through ubiquitination and deubiquitination involving creA, creB, creC, creD and acrB. Deubiquitinates the creA catabolic repressor and the quinate permease qutD. Also plays a role in response to carbon starvation and the control of extracellular proteases activity. The sequence is that of Probable ubiquitin carboxyl-terminal hydrolase creB (creB) from Aspergillus flavus (strain ATCC 200026 / FGSC A1120 / IAM 13836 / NRRL 3357 / JCM 12722 / SRRC 167).